The following is a 290-amino-acid chain: Ribosomal RNA small subunit methyltransferase A (290 aa).

N27, L29, G54, E75, D100, and N125 together coordinate S-adenosyl-L-methionine.

This sequence belongs to the class I-like SAM-binding methyltransferase superfamily. rRNA adenine N(6)-methyltransferase family. RsmA subfamily.

It localises to the cytoplasm. It catalyses the reaction adenosine(1518)/adenosine(1519) in 16S rRNA + 4 S-adenosyl-L-methionine = N(6)-dimethyladenosine(1518)/N(6)-dimethyladenosine(1519) in 16S rRNA + 4 S-adenosyl-L-homocysteine + 4 H(+). Specifically dimethylates two adjacent adenosines (A1518 and A1519) in the loop of a conserved hairpin near the 3'-end of 16S rRNA in the 30S particle. May play a critical role in biogenesis of 30S subunits. The sequence is that of Ribosomal RNA small subunit methyltransferase A from Streptococcus sanguinis (strain SK36).